The chain runs to 150 residues: Globin-3 (150 aa).

Residues 11 to 150 (PLSAAEKTKI…MICILLRSAY (140 aa)) form the Globin domain. Residues His-74 and His-106 each coordinate heme b.

The protein belongs to the globin family. In terms of assembly, monomer.

The sequence is that of Globin-3 from Petromyzon marinus (Sea lamprey).